Reading from the N-terminus, the 351-residue chain is CCN family member 3 (351 aa).

Positions 1-24 (METGGGQGLPVLLLLLLLLRPCEV) are cleaved as a signal peptide. An IGFBP N-terminal domain is found at 27–101 (REAACPRPCG…GGGAGICMVL (75 aa)). 6 cysteine pairs are disulfide-bonded: cysteine 31/cysteine 57, cysteine 35/cysteine 59, cysteine 39/cysteine 60, cysteine 46/cysteine 63, cysteine 71/cysteine 85, and cysteine 77/cysteine 98. Positions 104-170 (DNCVFDGMIY…GECCEKWVCD (67 aa)) constitute a VWFC domain. The TSP type-1 domain occupies 201 to 246 (NCIEQTTEWSACSKSCGMGFSTRVTNRNQQCEMVKQTRLCMMRPCE). Disulfide bonds link cysteine 258–cysteine 295, cysteine 275–cysteine 309, cysteine 286–cysteine 325, cysteine 289–cysteine 327, and cysteine 294–cysteine 331. Residues 258-332 (CIQTKKSMKA…NTCVCHGNCP (75 aa)) enclose the CTCK domain. Asparagine 274 is a glycosylation site (N-linked (GlcNAc...) asparagine).

Belongs to the CCN family. As to expression, brain and heart, and at a lower level in muscle and intestine, in the embryo. Lung and less so in brain and spleen, in adult chicken.

It localises to the secreted. Its subcellular location is the cytoplasm. It is found in the cell junction. The protein localises to the gap junction. In terms of biological role, immediate-early protein likely to play a role in cell growth regulation. Its overexpression is associated with tumorigenesis and expression of a N-terminal-truncated version of CCN3 gene in chicken embryonic fibroblasts (CEF) is sufficient to induce the transformation of CEF in vitro. The protein is CCN family member 3 (CCN3) of Gallus gallus (Chicken).